A 361-amino-acid polypeptide reads, in one-letter code: Peptide chain release factor 1 (361 aa).

Residue glutamine 236 is modified to N5-methylglutamine. The segment at 286-306 is disordered; sequence AADSQRAEARKGQVGSGDRSE.

This sequence belongs to the prokaryotic/mitochondrial release factor family. In terms of processing, methylated by PrmC. Methylation increases the termination efficiency of RF1.

The protein localises to the cytoplasm. Functionally, peptide chain release factor 1 directs the termination of translation in response to the peptide chain termination codons UAG and UAA. This chain is Peptide chain release factor 1, found in Magnetococcus marinus (strain ATCC BAA-1437 / JCM 17883 / MC-1).